The chain runs to 469 residues: Serine carboxypeptidase-like 41 (469 aa).

The N-terminal stretch at 1 to 20 (MAIVSLRDVAMVMVTVQVFA) is a signal peptide. 3 cysteine pairs are disulfide-bonded: cysteine 83-cysteine 342, cysteine 243-cysteine 260, and cysteine 285-cysteine 310. The N-linked (GlcNAc...) asparagine glycan is linked to asparagine 134. Serine 175 is a catalytic residue. Asparagine 255 carries N-linked (GlcNAc...) asparagine glycosylation. Asparagine 331 and asparagine 347 each carry an N-linked (GlcNAc...) asparagine glycan. Residues aspartate 379 and histidine 436 contribute to the active site. Asparagine 461 is a glycosylation site (N-linked (GlcNAc...) asparagine).

It belongs to the peptidase S10 family. In terms of tissue distribution, expressed in flowers.

The protein resides in the secreted. Probable carboxypeptidase. This Arabidopsis thaliana (Mouse-ear cress) protein is Serine carboxypeptidase-like 41 (SCPL41).